Here is a 1450-residue protein sequence, read N- to C-terminus: Phospholipase B1, membrane-associated (1450 aa).

An N-terminal signal peptide occupies residues 1-27 (MESWPGVSLVGLLLLLLLGQGPSQIHG). The Extracellular portion of the chain corresponds to 28 to 1422 (SSGENTSQPQ…KAKENSNTLY (1395 aa)). N-linked (GlcNAc...) asparagine glycans are attached at residues Asn32, Asn45, and Asn179. 3 consecutive repeat copies span residues 41-351 (RTLK…YRNS), 366-711 (MKEG…TKNS), and 712-1058 (NLGH…FRNS). The interval 41–1407 (RTLKNFSFPC…NPFLYTVRNS (1367 aa)) is 4 X 308-326 AA approximate repeats. Residues Ser404, Asp518, and His659 contribute to the active site. Residue Asn699 is glycosylated (N-linked (GlcNAc...) asparagine). Residues 708 to 720 (TKNSNLGHGTSMS) show a composition bias toward polar residues. The segment at 708–734 (TKNSNLGHGTSMSCEEKAPSASPPTSV) is disordered. N-linked (GlcNAc...) asparagine glycans are attached at residues Asn787, Asn801, Asn844, Asn880, Asn926, Asn1059, Asn1226, Asn1280, Asn1383, and Asn1387. Repeat 4 spans residues 1068–1407 (IENWGSDFLC…NPFLYTVRNS (340 aa)). The necessary for membrane localization stretch occupies residues 1408-1450 (QILLDKAKENSNTLYWAVPVAAVGGLVVGILGMMLWRTVRLVQ). Residues 1423 to 1443 (WAVPVAAVGGLVVGILGMMLW) traverse the membrane as a helical segment. Topologically, residues 1444-1450 (RTVRLVQ) are cytoplasmic.

This sequence belongs to the 'GDSL' lipolytic enzyme family. Phospholipase B1 subfamily. Post-translationally, undergoes proteolytic cleavage in the ileum. In terms of tissue distribution, expressed in the ileum mucosa, Paneth cells spermatocytes, spermatids and sperm (at protein level). Expressed in the ileum, jejunum, esophagus and testis.

It is found in the apical cell membrane. It catalyses the reaction a 1,2-diacyl-sn-glycero-3-phosphocholine + H2O = a 1-acyl-sn-glycero-3-phosphocholine + a fatty acid + H(+). The enzyme catalyses a 1-O-alkyl-2-acyl-sn-glycero-3-phosphocholine + H2O = a 1-O-alkyl-sn-glycero-3-phosphocholine + a fatty acid + H(+). It carries out the reaction a 1-acyl-sn-glycero-3-phosphocholine + H2O = sn-glycerol 3-phosphocholine + a fatty acid + H(+). The catalysed reaction is a triacylglycerol + H2O = a diacylglycerol + a fatty acid + H(+). It catalyses the reaction 1,2-dihexadecanoyl-sn-glycero-3-phosphocholine + H2O = 1-hexadecanoyl-sn-glycero-3-phosphocholine + hexadecanoate + H(+). The enzyme catalyses 1-hexadecanoyl-2-(9Z-octadecenoyl)-sn-glycero-3-phosphocholine + H2O = 1-hexadecanoyl-sn-glycero-3-phosphocholine + (9Z)-octadecenoate + H(+). It carries out the reaction 1,2-di-(9Z-octadecenoyl)-sn-glycero-3-phosphocholine + H2O = 1-(9Z-octadecenoyl)-sn-glycero-3-phosphocholine + (9Z)-octadecenoate + H(+). The catalysed reaction is 1-hexadecanoyl-2-(9Z,12Z-octadecadienoyl)-sn-glycero-3-phosphocholine + H2O = (9Z,12Z)-octadecadienoate + 1-hexadecanoyl-sn-glycero-3-phosphocholine + H(+). It catalyses the reaction 1-hexadecanoyl-2-(9Z,12Z-octadecadienoyl)-sn-glycero-3-phosphocholine + H2O = 2-(9Z,12Z-octadecadienoyl)-sn-glycero-3-phosphocholine + hexadecanoate + H(+). The enzyme catalyses 1-hexadecanoyl-2-(9Z-octadecenoyl)-sn-glycero-3-phosphoethanolamine + H2O = 1-hexadecanoyl-sn-glycero-3-phosphoethanolamine + (9Z)-octadecenoate + H(+). It carries out the reaction 1-hexadecanoyl-2-(9Z-octadecenoyl)-sn-glycero-3-phospho-(1'-sn-glycerol) + H2O = 1-hexadecanoyl-sn-glycero-3-phospho-(1'-sn-glycerol) + (9Z)-octadecenoate + H(+). The catalysed reaction is 1,2-dihexadecanoyl-sn-glycero-3-phosphocholine + 2 H2O = sn-glycerol 3-phosphocholine + 2 hexadecanoate + 2 H(+). It catalyses the reaction 1-O-hexadecyl-2-(9Z)-octadecenoyl-sn-glycero-3-phosphocholine + H2O = 1-O-hexadecyl-sn-glycero-3-phosphocholine + (9Z)-octadecenoate + H(+). The enzyme catalyses 1-hexadecanoyl-sn-glycero-3-phosphocholine + H2O = sn-glycerol 3-phosphocholine + hexadecanoate + H(+). It carries out the reaction 1,2,3-tri-(9Z-octadecenoyl)-glycerol + H2O = di-(9Z)-octadecenoylglycerol + (9Z)-octadecenoate + H(+). The catalysed reaction is 1-hexadecanoyl-2-(9Z)-octadecenoyl-3-octadecanoyl-sn-glycerol + H2O = 1-hexadecanoyl-2-(9Z-octadecenoyl)-sn-glycerol + octadecanoate + H(+). It catalyses the reaction 1,3-dihexadecanoyl-2-(9Z-octadecenoyl)glycerol + H2O = 1,3-dihexadecanoylglycerol + (9Z)-octadecenoate + H(+). The enzyme catalyses 1,3-dihexadecanoyl-2-(9Z-octadecenoyl)glycerol + H2O = 1-hexadecanoyl-2-(9Z-octadecenoyl)-glycerol + hexadecanoate + H(+). It carries out the reaction 1-hexadecanoyl-2-(9Z)-octadecenoyl-3-octadecanoyl-sn-glycerol + H2O = 1-hexadecanoyl-3-octadecanoyl-sn-glycerol + (9Z)-octadecenoate + H(+). The catalysed reaction is 1-hexadecanoyl-2-(9Z)-octadecenoyl-3-octadecanoyl-sn-glycerol + H2O = 2-(9Z-octadecenoyl)-3-octadecanoyl-sn-glycerol + hexadecanoate + H(+). It catalyses the reaction 1-octadecanoyl-2-(9Z,12Z)-octadecadienoyl-sn-glycerol + H2O = 1-octadecanoyl-sn-glycerol + (9Z,12Z)-octadecadienoate + H(+). The enzyme catalyses 1,2-di-(9Z-octadecenoyl)-sn-glycerol + H2O = 1-(9Z-octadecenoyl)-sn-glycerol + (9Z)-octadecenoate + H(+). It carries out the reaction 2,3-di-(9Z)-octadecenoyl-sn-glycerol + H2O = 3-(9Z-octadecenoyl)-sn-glycerol + (9Z)-octadecenoate + H(+). The catalysed reaction is 1,3-di-(9Z-octadecenoyl)-glycerol + H2O = 1-(9Z-octadecenoyl)-glycerol + (9Z)-octadecenoate + H(+). It catalyses the reaction 1-(9Z-octadecenoyl)-glycerol + H2O = glycerol + (9Z)-octadecenoate + H(+). The enzyme catalyses 2-(9Z-octadecenoyl)-glycerol + H2O = glycerol + (9Z)-octadecenoate + H(+). With respect to regulation, up-regulated by bile acids such as deoxycholate. Inhibited by diisopropyl fluorophosphate. Calcium-independent membrane-associated phospholipase that catalyzes complete diacylation of phospholipids by hydrolyzing both sn-1 and sn-2 fatty acyl chains attached to the glycerol backbone (phospholipase B activity). Has dual phospholipase and lysophospholipase activities toward diacylphospholipids. Preferentially cleaves sn-2 ester bonds over sn-1 bonds. Acts as a lipase toward glycerolipid substrates. Hydrolyzes fatty acyl chains of diacylglycerols with preference for the sn-2 position and of triacylglycerols with not positional selectivity. May also hydrolyze long chain retinyl esters such as retinyl palmitate. May contribute to digestion of dietary phospholipids, glycerolipids and retinoids, facilitating lipid absorption at the brush border. The chain is Phospholipase B1, membrane-associated (Plb1) from Rattus norvegicus (Rat).